Here is a 154-residue protein sequence, read N- to C-terminus: MYYYLITLAVIALDQLTKWIVVQNMEIGQKIEVIPGFLYWTSYRNDGAAWSILEGHMWFFYLITVVVIGIIIYIMQKYAKGKRLFSISLAFILGGAIGNFIDRVLHQEVVDFVQTVWGNYYFPIFNVADAALSVGVVLMLVYVFVDDRKTKGIK.

Transmembrane regions (helical) follow at residues 55–75 (GHMWFFYLITVVVIGIIIYIM) and 84–104 (LFSISLAFILGGAIGNFIDRV). Active-site residues include D111 and D129. The chain crosses the membrane as a helical span at residues 124 to 144 (IFNVADAALSVGVVLMLVYVF).

Belongs to the peptidase A8 family.

The protein resides in the cell membrane. It catalyses the reaction Release of signal peptides from bacterial membrane prolipoproteins. Hydrolyzes -Xaa-Yaa-Zaa-|-(S,diacylglyceryl)Cys-, in which Xaa is hydrophobic (preferably Leu), and Yaa (Ala or Ser) and Zaa (Gly or Ala) have small, neutral side chains.. It participates in protein modification; lipoprotein biosynthesis (signal peptide cleavage). In terms of biological role, this protein specifically catalyzes the removal of signal peptides from prolipoproteins. In Listeria monocytogenes serotype 4b (strain CLIP80459), this protein is Lipoprotein signal peptidase.